The following is a 2099-amino-acid chain: Dedicator of cytokinesis protein 8 (2099 aa).

A phosphoserine mark is found at serine 20, serine 139, and serine 451. Positions 560–729 constitute a C2 DOCK-type domain; it reads RNLLYVYPQR…GVFNIEVQAV (170 aa). Residues serine 904, serine 936, serine 1145, and serine 1243 each carry the phosphoserine modification. The DOCKER domain occupies 1632–2066; that stretch reads KSYQASPDLR…LRPMIERKIP (435 aa). Position 2087 is a phosphoserine (serine 2087).

Belongs to the DOCK family. Interacts (via DOCKER domain) with GTPase CDC42; the interaction activates CDC42 by exchanging GDP for GTP. The unphosphorylated form interacts (via DOCKER domain) with LRCH1 (via LRR repeats); the interaction prevents the association between DOCK8 and CDC42. Interacts with CCDC88B. In terms of processing, in response to chemokine CXCL12/SDF-1-alpha stimulation, phosphorylated by PRKCA/PKC-alpha which promotes DOCK8 dissociation from LRCH1. Expressed in peripheral blood mononuclear cells (PBMCs).

It is found in the cytoplasm. Its subcellular location is the cell membrane. The protein resides in the cell projection. The protein localises to the lamellipodium membrane. Functionally, guanine nucleotide exchange factor (GEF) which specifically activates small GTPase CDC42 by exchanging bound GDP for free GTP. During immune responses, required for interstitial dendritic cell (DC) migration by locally activating CDC42 at the leading edge membrane of DC. Required for CD4(+) T-cell migration in response to chemokine stimulation by promoting CDC42 activation at T cell leading edge membrane. Is involved in NK cell cytotoxicity by controlling polarization of microtubule-organizing center (MTOC), and possibly regulating CCDC88B-mediated lytic granule transport to MTOC during cell killing. This Homo sapiens (Human) protein is Dedicator of cytokinesis protein 8 (DOCK8).